The sequence spans 442 residues: Tubulin beta chain (442 aa).

Gln-11, Glu-69, Ser-138, Gly-142, Thr-143, Gly-144, Asn-204, and Asn-226 together coordinate GTP. Glu-69 serves as a coordination point for Mg(2+).

This sequence belongs to the tubulin family. Dimer of alpha and beta chains. A typical microtubule is a hollow water-filled tube with an outer diameter of 25 nm and an inner diameter of 15 nM. Alpha-beta heterodimers associate head-to-tail to form protofilaments running lengthwise along the microtubule wall with the beta-tubulin subunit facing the microtubule plus end conferring a structural polarity. Microtubules usually have 13 protofilaments but different protofilament numbers can be found in some organisms and specialized cells. Mg(2+) serves as cofactor.

The protein localises to the cytoplasm. Its subcellular location is the cytoskeleton. In terms of biological role, tubulin is the major constituent of microtubules, a cylinder consisting of laterally associated linear protofilaments composed of alpha- and beta-tubulin heterodimers. Microtubules grow by the addition of GTP-tubulin dimers to the microtubule end, where a stabilizing cap forms. Below the cap, tubulin dimers are in GDP-bound state, owing to GTPase activity of alpha-tubulin. This chain is Tubulin beta chain (bPT2), found in Paramecium tetraurelia.